A 281-amino-acid chain; its full sequence is Fibrinogen-like protein 1-like protein (281 aa).

An N-terminal signal peptide occupies residues 1 to 33; the sequence is MGLQAGTRQLHGNLILLPVAVVMLLLCTSPVCA. One can recognise a Fibrinogen C-terminal domain in the interval 34–246; sequence TASVGLPADC…RPSSWSNPPM (213 aa). 2 disulfide bridges follow: Cys43–Cys69 and Cys201–Cys213. Over residues 260-269 the composition is skewed to low complexity; that stretch reads PSRSPSLPSP. Residues 260–281 are disordered; it reads PSRSPSLPSPITATHTVRNQLQ. The span at 270-281 shows a compositional bias: polar residues; the sequence is ITATHTVRNQLQ.

As to expression, expressed in smal intestine, colon and lung.

Shows a cytidine deaminase activity on 2'-deoxycytidine (in vitro), however shows no RNA editing activity (in vitro). The protein is Fibrinogen-like protein 1-like protein of Gallus gallus (Chicken).